The following is a 377-amino-acid chain: Chaperone protein DnaJ (377 aa).

The J domain occupies 5–70 (DCYEVLGISR…QKKAAYDQYG (66 aa)). A CR-type zinc finger spans residues 133 to 211 (GISKEIQIPT…CHGHGRYERS (79 aa)). Zn(2+) is bound by residues cysteine 146, cysteine 149, cysteine 163, cysteine 166, cysteine 185, cysteine 188, cysteine 199, and cysteine 202. CXXCXGXG motif repeat units lie at residues 146 to 153 (CEQCNGSG), 163 to 170 (CGTCYGQG), 185 to 192 (CPTCRGQG), and 199 to 206 (CHKCHGHG).

It belongs to the DnaJ family. Homodimer. Zn(2+) is required as a cofactor.

The protein resides in the cytoplasm. Participates actively in the response to hyperosmotic and heat shock by preventing the aggregation of stress-denatured proteins and by disaggregating proteins, also in an autonomous, DnaK-independent fashion. Unfolded proteins bind initially to DnaJ; upon interaction with the DnaJ-bound protein, DnaK hydrolyzes its bound ATP, resulting in the formation of a stable complex. GrpE releases ADP from DnaK; ATP binding to DnaK triggers the release of the substrate protein, thus completing the reaction cycle. Several rounds of ATP-dependent interactions between DnaJ, DnaK and GrpE are required for fully efficient folding. Also involved, together with DnaK and GrpE, in the DNA replication of plasmids through activation of initiation proteins. The protein is Chaperone protein DnaJ of Psychromonas ingrahamii (strain DSM 17664 / CCUG 51855 / 37).